Reading from the N-terminus, the 882-residue chain is Alanine--tRNA ligase (882 aa).

Positions 570, 574, 672, and 676 each coordinate Zn(2+).

It belongs to the class-II aminoacyl-tRNA synthetase family. It depends on Zn(2+) as a cofactor.

The protein localises to the cytoplasm. The enzyme catalyses tRNA(Ala) + L-alanine + ATP = L-alanyl-tRNA(Ala) + AMP + diphosphate. Catalyzes the attachment of alanine to tRNA(Ala) in a two-step reaction: alanine is first activated by ATP to form Ala-AMP and then transferred to the acceptor end of tRNA(Ala). Also edits incorrectly charged Ser-tRNA(Ala) and Gly-tRNA(Ala) via its editing domain. This is Alanine--tRNA ligase from Xanthomonas campestris pv. campestris (strain ATCC 33913 / DSM 3586 / NCPPB 528 / LMG 568 / P 25).